The sequence spans 433 residues: G-protein coupled receptor 22 (433 aa).

At 1-45 (MCFSPILEINMQSESNITVRDDIDDINTNMYQPLSYPLSFQVSLT) the chain is on the extracellular side. N-linked (GlcNAc...) asparagine glycosylation occurs at Asn16. A helical membrane pass occupies residues 46–66 (GFLMLEIVLGLGSNLTVLVLY). The Cytoplasmic portion of the chain corresponds to 67 to 85 (CMKSNLINSVSNIITMNLH). A helical transmembrane segment spans residues 86–106 (VLDVIICVGCIPLTIVILLLS). The Extracellular portion of the chain corresponds to 107–115 (LESNTALIC). The helical transmembrane segment at 116-136 (CFHEACVSFASVSTAINVFAI) threads the bilayer. At 137 to 156 (TLDRYDISVKPANRILTMGR) the chain is on the cytoplasmic side. A helical membrane pass occupies residues 157 to 177 (AVMLMISIWIFSFFSFLIPFI). The Extracellular portion of the chain corresponds to 178–208 (EVNFFSLQSGNTWENKTLLCVSTNEYYTELG). Residue Asn192 is glycosylated (N-linked (GlcNAc...) asparagine). A helical membrane pass occupies residues 209–229 (MYYHLLVQIPIFFFTVVVMLI). Over 230–315 (TYTKILQALN…ERQKRVFRMS (86 aa)) the chain is Cytoplasmic. Residues 316-336 (LLIISTFLLCWTPISVLNTTI) form a helical membrane-spanning segment. Residues 337 to 349 (LCLGPSDLLVKLR) are Extracellular-facing. Residues 350 to 370 (LCFLVMAYGTTIFHPLLYAFT) traverse the membrane as a helical segment. The Cytoplasmic portion of the chain corresponds to 371-433 (RQKFQKVLKS…KCLVPQVVTD (63 aa)).

It belongs to the G-protein coupled receptor 1 family. In terms of tissue distribution, high expression in adult and fetal heart tissue. Expressed in the brain, with enrichment in the accumbens, amygdala, cerebellum, cortex, and hippocampus regions.

It is found in the cell membrane. Orphan G-protein coupled receptor. Seems to act through a G(i)/G(o) mediated pathway. May be involved in ciliogenesis. This Homo sapiens (Human) protein is G-protein coupled receptor 22.